The chain runs to 475 residues: Ribulose bisphosphate carboxylase large chain (475 aa).

The propeptide occupies 1–2; sequence MV. An N-acetylproline modification is found at Pro-3. N6,N6,N6-trimethyllysine is present on Lys-14. Substrate is bound by residues Asn-123 and Thr-173. Residue Lys-175 is the Proton acceptor of the active site. Lys-177 provides a ligand contact to substrate. The Mg(2+) site is built by Lys-201, Asp-203, and Glu-204. At Lys-201 the chain carries N6-carboxylysine. His-294 acts as the Proton acceptor in catalysis. Residues Arg-295, His-327, and Ser-379 each coordinate substrate.

It belongs to the RuBisCO large chain family. Type I subfamily. Heterohexadecamer of 8 large chains and 8 small chains. The cofactor is Mg(2+).

It is found in the plastid. It localises to the chloroplast. The catalysed reaction is 2 (2R)-3-phosphoglycerate + 2 H(+) = D-ribulose 1,5-bisphosphate + CO2 + H2O. It carries out the reaction D-ribulose 1,5-bisphosphate + O2 = 2-phosphoglycolate + (2R)-3-phosphoglycerate + 2 H(+). Functionally, ruBisCO catalyzes two reactions: the carboxylation of D-ribulose 1,5-bisphosphate, the primary event in carbon dioxide fixation, as well as the oxidative fragmentation of the pentose substrate in the photorespiration process. Both reactions occur simultaneously and in competition at the same active site. The polypeptide is Ribulose bisphosphate carboxylase large chain (Dunaliella tertiolecta (Green alga)).